The chain runs to 374 residues: Chaperone protein DnaJ (374 aa).

The region spanning 5–70 (CYYEILNVSK…SKRSRYDQFG (66 aa)) is the J domain. The CR-type zinc-finger motif lies at 130 to 207 (GVEKEITIPR…CYGNGKVKKQ (78 aa)). Residues Cys-143, Cys-146, Cys-159, Cys-162, Cys-181, Cys-184, Cys-195, and Cys-198 each contribute to the Zn(2+) site. CXXCXGXG motif repeat units lie at residues 143–150 (CDSCDGTG), 159–166 (CHACHGQG), 181–188 (CPVCNGTG), and 195–202 (CDACYGNG).

Belongs to the DnaJ family. Homodimer. Requires Zn(2+) as cofactor.

It localises to the cytoplasm. Its function is as follows. Participates actively in the response to hyperosmotic and heat shock by preventing the aggregation of stress-denatured proteins and by disaggregating proteins, also in an autonomous, DnaK-independent fashion. Unfolded proteins bind initially to DnaJ; upon interaction with the DnaJ-bound protein, DnaK hydrolyzes its bound ATP, resulting in the formation of a stable complex. GrpE releases ADP from DnaK; ATP binding to DnaK triggers the release of the substrate protein, thus completing the reaction cycle. Several rounds of ATP-dependent interactions between DnaJ, DnaK and GrpE are required for fully efficient folding. Also involved, together with DnaK and GrpE, in the DNA replication of plasmids through activation of initiation proteins. The protein is Chaperone protein DnaJ of Francisella tularensis subsp. tularensis (strain FSC 198).